The sequence spans 306 residues: UDP-3-O-acyl-N-acetylglucosamine deacetylase (306 aa).

Residues His79, His238, and Asp242 each coordinate Zn(2+). His265 (proton donor) is an active-site residue.

This sequence belongs to the LpxC family. The cofactor is Zn(2+).

The enzyme catalyses a UDP-3-O-[(3R)-3-hydroxyacyl]-N-acetyl-alpha-D-glucosamine + H2O = a UDP-3-O-[(3R)-3-hydroxyacyl]-alpha-D-glucosamine + acetate. Its pathway is glycolipid biosynthesis; lipid IV(A) biosynthesis; lipid IV(A) from (3R)-3-hydroxytetradecanoyl-[acyl-carrier-protein] and UDP-N-acetyl-alpha-D-glucosamine: step 2/6. In terms of biological role, catalyzes the hydrolysis of UDP-3-O-myristoyl-N-acetylglucosamine to form UDP-3-O-myristoylglucosamine and acetate, the committed step in lipid A biosynthesis. In Shewanella baltica (strain OS223), this protein is UDP-3-O-acyl-N-acetylglucosamine deacetylase.